We begin with the raw amino-acid sequence, 259 residues long: Chymotrypsin-1 (259 aa).

Residues 1–17 (MLRKVFAVVSVLLVVSA) form the signal peptide. The propeptide at 18-32 (AKVTKLVLDDNYVNR) is activation peptide. A Peptidase S1 domain is found at 33–255 (VVGGEVAKNG…YHDWVRTTMA (223 aa)). A disulfide bond links C59 and C75. Catalysis depends on charge relay system residues H74 and D119. 2 disulfide bridges follow: C182–C198 and C208–C232. Catalysis depends on S212, which acts as the Charge relay system.

It belongs to the peptidase S1 family. In terms of tissue distribution, after blood feeding, expression is induced in the midgut epithelium, followed by secretion into the midgut lumen.

It localises to the secreted. The catalysed reaction is Preferential cleavage: Tyr-|-Xaa, Trp-|-Xaa, Phe-|-Xaa, Leu-|-Xaa.. The protein is Chymotrypsin-1 (CHYM1) of Anopheles gambiae (African malaria mosquito).